The chain runs to 138 residues: Translation initiation factor 2 subunit beta (138 aa).

Belongs to the eIF-2-beta/eIF-5 family. In terms of assembly, heterotrimer composed of an alpha, a beta and a gamma chain.

Functionally, eIF-2 functions in the early steps of protein synthesis by forming a ternary complex with GTP and initiator tRNA. The protein is Translation initiation factor 2 subunit beta of Methanococcus maripaludis (strain DSM 14266 / JCM 13030 / NBRC 101832 / S2 / LL).